A 65-amino-acid chain; its full sequence is 7 kDa A-type inclusion protein (65 aa).

Polar residues predominate over residues M1–A20. The disordered stretch occupies residues M1 to Q31.

The polypeptide is 7 kDa A-type inclusion protein (Vaccinia virus (strain Copenhagen) (VACV)).